Reading from the N-terminus, the 203-residue chain is Ras-like protein family member 10A (203 aa).

Residues 1 to 203 are small GTPase-like; it reads MGGSLRVAVL…ALHPARCSLM (203 aa). 11-18 contacts GTP; that stretch reads GAPGVGKT. Residues 33-42 carry the Effector region motif; sequence HRPTDGPRLY. GTP-binding positions include 59–62 and 129–132; these read DGDV and NKRD. Cys-200 bears the Cysteine methyl ester mark. Cys-200 carries the S-farnesyl cysteine lipid modification. A propeptide spans 201–203 (removed in mature form); that stretch reads SLM.

The protein belongs to the small GTPase superfamily. Ras family. In terms of processing, isoprenylation is essential for nucleolar localization, and the proliferation-inhibiting activity of RASL10A. As to expression, expression appears to be strictly limited to the central nervous system.

It localises to the cell membrane. The protein resides in the nucleus. It is found in the nucleolus. The enzyme catalyses GTP + H2O = GDP + phosphate + H(+). Functionally, potent inhibitor of cellular proliferation. This is Ras-like protein family member 10A (RASL10A) from Homo sapiens (Human).